A 65-amino-acid chain; its full sequence is Sodium channel neurotoxin MeuNaTxalpha-9 (65 aa).

Residues 2–64 (RDGYIANDRN…VPIRIPGECR (63 aa)) form the LCN-type CS-alpha/beta domain. 4 cysteine pairs are disulfide-bonded: cysteine 12–cysteine 63, cysteine 16–cysteine 36, cysteine 22–cysteine 46, and cysteine 26–cysteine 48. Position 64 is an arginine amide (arginine 64).

It belongs to the long (4 C-C) scorpion toxin superfamily. Sodium channel inhibitor family. Alpha subfamily. As to expression, expressed by the venom gland.

The protein resides in the secreted. Alpha toxins bind voltage-independently at site-3 of sodium channels (Nav) and inhibit the inactivation of the activated channels, thereby blocking neuronal transmission. This Mesobuthus eupeus (Lesser Asian scorpion) protein is Sodium channel neurotoxin MeuNaTxalpha-9.